The following is a 129-amino-acid chain: Protein RALF-like 34 (129 aa).

Residues 1–23 (MAASSLNLLLILSLLTFISLQRS) form the signal peptide. Positions 24–76 (ESLSDNPSLTLLPDGFDWPISHSDEFDIIDGEESFEVTEEDDGVTDRRSLYWR) are cleaved as a propeptide — removed in mature form. 2 disulfide bridges follow: Cys94–Cys107 and Cys121–Cys127.

The protein belongs to the plant rapid alkalinization factor (RALF) family. Proteolytically cleaved, probably by S1P, a subtilisin-like serine protease (subtilase). Expressed in roots, stems and leaves.

It localises to the secreted. Functionally, cell signaling peptide that may regulate plant stress, growth, and development. Mediates a rapid alkalinization of extracellular space by mediating a transient increase in the cytoplasmic Ca(2+) concentration leading to a calcium-dependent signaling events through a cell surface receptor and a concomitant activation of some intracellular mitogen-activated protein kinases. The polypeptide is Protein RALF-like 34 (RALFL34) (Arabidopsis thaliana (Mouse-ear cress)).